Consider the following 453-residue polypeptide: Allantoinase (453 aa).

Zn(2+) is bound by residues His-59, His-61, Lys-146, His-186, His-242, and Asp-315. An N6-carboxylysine modification is found at Lys-146.

The protein belongs to the metallo-dependent hydrolases superfamily. Allantoinase family. In terms of assembly, homotetramer. Requires Zn(2+) as cofactor. Carboxylation allows a single lysine to coordinate two zinc ions.

It carries out the reaction (S)-allantoin + H2O = allantoate + H(+). Its pathway is nitrogen metabolism; (S)-allantoin degradation; allantoate from (S)-allantoin: step 1/1. Catalyzes the conversion of allantoin (5-ureidohydantoin) to allantoic acid by hydrolytic cleavage of the five-member hydantoin ring. The protein is Allantoinase of Salmonella gallinarum (strain 287/91 / NCTC 13346).